The primary structure comprises 164 residues: MSSRDNDTSQSDHVPLDLTIEILSRLPAKSVGRFRSVSKLWSANTTSQNFINSFATGSLASRPSVLLTVRKGDILFVFSYPVDKNSSDGQFTCVGSYQLTNPNFGNLSRYHFLKWTQYRTKSYTSKMRNSIREVETVGDEVRLSDKYMYTMNVYPNHIESLVSL.

The region spanning 9-56 (SQSDHVPLDLTIEILSRLPAKSVGRFRSVSKLWSANTTSQNFINSFAT) is the F-box domain.

The sequence is that of Putative F-box protein At1g59675 from Arabidopsis thaliana (Mouse-ear cress).